We begin with the raw amino-acid sequence, 212 residues long: uncharacterized protein (212 aa).

Residues 11-31 form a helical membrane-spanning segment; sequence NLIFFQFIVYFFFISLTILII.

It localises to the membrane. This is an uncharacterized protein from Rickettsia prowazekii (strain Madrid E).